A 351-amino-acid polypeptide reads, in one-letter code: Phosphoribosylformylglycinamidine cyclo-ligase (351 aa).

The protein belongs to the AIR synthase family.

It is found in the cytoplasm. The enzyme catalyses 2-formamido-N(1)-(5-O-phospho-beta-D-ribosyl)acetamidine + ATP = 5-amino-1-(5-phospho-beta-D-ribosyl)imidazole + ADP + phosphate + H(+). The protein operates within purine metabolism; IMP biosynthesis via de novo pathway; 5-amino-1-(5-phospho-D-ribosyl)imidazole from N(2)-formyl-N(1)-(5-phospho-D-ribosyl)glycinamide: step 2/2. The protein is Phosphoribosylformylglycinamidine cyclo-ligase of Lysinibacillus sphaericus (strain C3-41).